Consider the following 201-residue polypeptide: Cell division protein SepF (201 aa).

A compositionally biased stretch (basic and acidic residues) spans 27-38 (VQERTSVQRDSR). The interval 27-99 (VQERTSVQRD…PRIQNKDSVR (73 aa)) is disordered. Composition is skewed to polar residues over residues 43-54 (QEASQRSHMTNS) and 82-92 (DNSYQQATPRI).

This sequence belongs to the SepF family. In terms of assembly, homodimer. Interacts with FtsZ.

It is found in the cytoplasm. In terms of biological role, cell division protein that is part of the divisome complex and is recruited early to the Z-ring. Probably stimulates Z-ring formation, perhaps through the cross-linking of FtsZ protofilaments. Its function overlaps with FtsA. In Streptococcus agalactiae serotype III (strain NEM316), this protein is Cell division protein SepF.